The following is a 207-amino-acid chain: 3,4-dihydroxy-2-butanone 4-phosphate synthase (207 aa).

D-ribulose 5-phosphate is bound by residues 28–29 (RE), aspartate 33, 140–144 (RRGHT), and glutamate 164. Glutamate 29 contributes to the Mg(2+) binding site. Mg(2+) is bound at residue histidine 143.

The protein belongs to the DHBP synthase family. Homodimer. The cofactor is Mg(2+). Requires Mn(2+) as cofactor.

The catalysed reaction is D-ribulose 5-phosphate = (2S)-2-hydroxy-3-oxobutyl phosphate + formate + H(+). Its pathway is cofactor biosynthesis; riboflavin biosynthesis; 2-hydroxy-3-oxobutyl phosphate from D-ribulose 5-phosphate: step 1/1. Functionally, catalyzes the conversion of D-ribulose 5-phosphate to formate and 3,4-dihydroxy-2-butanone 4-phosphate. This chain is 3,4-dihydroxy-2-butanone 4-phosphate synthase, found in Oceanobacillus iheyensis (strain DSM 14371 / CIP 107618 / JCM 11309 / KCTC 3954 / HTE831).